A 262-amino-acid polypeptide reads, in one-letter code: LysM domain-containing protein ARB_03438 (262 aa).

Positions 1 to 22 are cleaved as a signal peptide; it reads MVSIPLILGAIILLGTRKAATA. A LysM 1 domain is found at 31-75; sequence FAVTAATDDTCQSLGAQWGIGMAQFLKWNPGVNCNALVAGKTYCL. Residues 85 to 112 are disordered; the sequence is TASLTPSPQVPTTSRATQTMTSKASTGT. A compositionally biased stretch (polar residues) spans 86–112; sequence ASLTPSPQVPTTSRATQTMTSKASTGT. The LysM 2 domain maps to 132 to 179; that stretch reads FYHPVSPGDTCQSIVDRYKAFTLDQFYTWNPSVGKNCESLWLGYYVCT. Positions 184 to 240 are disordered; the sequence is GPNSPSQQPPSQQPPSQQSPSQQSPSQQSPSQQPPSQQPPSQQPPSQQSNTSQQTQP. Residues 197–214 are compositionally biased toward low complexity; it reads PPSQQSPSQQSPSQQSPS. Residues 215-226 show a composition bias toward pro residues; the sequence is QQPPSQQPPSQQ. A compositionally biased stretch (low complexity) spans 227–240; sequence PPSQQSNTSQQTQP. Residue N233 is glycosylated (N-linked (GlcNAc...) asparagine).

Its subcellular location is the secreted. Its function is as follows. Might have a role in sequestration of chitin oligosaccharides (breakdown products of fungal cell walls that are released during invasion and act as triggers of host immunity) to dampen host defense. This Arthroderma benhamiae (strain ATCC MYA-4681 / CBS 112371) (Trichophyton mentagrophytes) protein is LysM domain-containing protein ARB_03438.